A 257-amino-acid polypeptide reads, in one-letter code: Phycoerythrobilin:ferredoxin oxidoreductase (257 aa).

The protein belongs to the HY2 family.

The enzyme catalyses (3Z)-phycoerythrobilin + oxidized 2[4Fe-4S]-[ferredoxin] = 15,16-dihydrobiliverdin + reduced 2[4Fe-4S]-[ferredoxin] + 2 H(+). Functionally, catalyzes the two-electron reduction of the C2 and C3(1) diene system of 15,16-dihydrobiliverdin. This chain is Phycoerythrobilin:ferredoxin oxidoreductase, found in Synechococcus sp. (strain CC9311).